The chain runs to 149 residues: Histidine-containing phosphotransfer protein 2 (149 aa).

The HPt domain occupies 39–144; that stretch reads TPGFVSEVVT…LQLEQQIQAY (106 aa). Position 80 is a phosphohistidine (histidine 80).

In terms of processing, two-component system major event consists of a His-to-Asp phosphorelay between a sensor histidine kinase (HK) and a response regulator (RR). In plants, the His-to-Asp phosphorelay involves an additional intermediate named Histidine-containing phosphotransfer protein (HPt). This multistep phosphorelay consists of a His-Asp-His-Asp sequential transfer of a phosphate group between first a His and an Asp of the HK protein, followed by the transfer to a conserved His of the HPt protein and finally the transfer to an Asp in the receiver domain of the RR protein. As to expression, widely expressed.

Its subcellular location is the cytoplasm. It is found in the cytosol. The protein localises to the nucleus. In terms of biological role, functions as a two-component phosphorelay mediators between cytokinin sensor histidine kinases and response regulators (B-type ARRs). Plays an important role in propagating cytokinin signal transduction through the multistep His-to-Asp phosphorelay. Functions as a positive regulator of the cytokinin signaling pathway. May play a regulatory role in salt and drought tolerance during plant development. This Oryza sativa subsp. japonica (Rice) protein is Histidine-containing phosphotransfer protein 2.